The chain runs to 268 residues: Large ribosomal subunit protein uL3 (268 aa).

Position 156 is an N5-methylglutamine (Gln-156). The span at 242-259 (VENEAAPADADNAAPEAA) shows a compositional bias: low complexity. Residues 242-268 (VENEAAPADADNAAPEAAADGEEGTQA) are disordered.

Belongs to the universal ribosomal protein uL3 family. In terms of assembly, part of the 50S ribosomal subunit. Forms a cluster with proteins L14 and L19. Post-translationally, methylated by PrmB.

Its function is as follows. One of the primary rRNA binding proteins, it binds directly near the 3'-end of the 23S rRNA, where it nucleates assembly of the 50S subunit. In Maricaulis maris (strain MCS10) (Caulobacter maris), this protein is Large ribosomal subunit protein uL3.